Consider the following 580-residue polypeptide: Arginine--tRNA ligase (580 aa).

The 'HIGH' region motif lies at 127–137 (PNLAKEMHVGH).

It belongs to the class-I aminoacyl-tRNA synthetase family. Monomer.

It localises to the cytoplasm. The catalysed reaction is tRNA(Arg) + L-arginine + ATP = L-arginyl-tRNA(Arg) + AMP + diphosphate. The chain is Arginine--tRNA ligase from Idiomarina loihiensis (strain ATCC BAA-735 / DSM 15497 / L2-TR).